Reading from the N-terminus, the 239-residue chain is Purine nucleoside phosphorylase DeoD-type (239 aa).

Residue histidine 5 coordinates a purine D-ribonucleoside. Residues glycine 21, arginine 25, arginine 44, and 88-91 (RVGS) each bind phosphate. Residues 180–182 (EME) and 204–205 (SD) each bind a purine D-ribonucleoside. Residue aspartate 205 is the Proton donor of the active site.

This sequence belongs to the PNP/UDP phosphorylase family. In terms of assembly, homohexamer; trimer of homodimers.

The catalysed reaction is a purine D-ribonucleoside + phosphate = a purine nucleobase + alpha-D-ribose 1-phosphate. It catalyses the reaction a purine 2'-deoxy-D-ribonucleoside + phosphate = a purine nucleobase + 2-deoxy-alpha-D-ribose 1-phosphate. In terms of biological role, catalyzes the reversible phosphorolytic breakdown of the N-glycosidic bond in the beta-(deoxy)ribonucleoside molecules, with the formation of the corresponding free purine bases and pentose-1-phosphate. In Erwinia tasmaniensis (strain DSM 17950 / CFBP 7177 / CIP 109463 / NCPPB 4357 / Et1/99), this protein is Purine nucleoside phosphorylase DeoD-type.